The sequence spans 152 residues: SsrA-binding protein (152 aa).

This sequence belongs to the SmpB family.

The protein localises to the cytoplasm. Required for rescue of stalled ribosomes mediated by trans-translation. Binds to transfer-messenger RNA (tmRNA), required for stable association of tmRNA with ribosomes. tmRNA and SmpB together mimic tRNA shape, replacing the anticodon stem-loop with SmpB. tmRNA is encoded by the ssrA gene; the 2 termini fold to resemble tRNA(Ala) and it encodes a 'tag peptide', a short internal open reading frame. During trans-translation Ala-aminoacylated tmRNA acts like a tRNA, entering the A-site of stalled ribosomes, displacing the stalled mRNA. The ribosome then switches to translate the ORF on the tmRNA; the nascent peptide is terminated with the 'tag peptide' encoded by the tmRNA and targeted for degradation. The ribosome is freed to recommence translation, which seems to be the essential function of trans-translation. This Rickettsia montanensis protein is SsrA-binding protein.